The sequence spans 276 residues: MENRYATSPEDVKRYTTDKLRQEFLVESLFTPGEIQMVYTHFDRTVIGGAIPMKEPLALDAGDFLKTDYFLERREVGIINIGPKGKVIVDGDEYTLNKRDCLYIGLGKRDVSFHSEDSSNPARFYFVSALAHHEYPTKVLPIEEAVPTKLGSDAESNNRTIYKYIHSEGIQSCQLMMGMTLLEPNNMWNTMPAHIHDRRNEVYLYFDMEDDSRVFHFMGQPHETRHLVVKNEQAVISPPWSIHSGVGTANYTFIWAMAGENYTFTDMEFIKMEDLR.

Residues histidine 194, histidine 196, glutamate 201, and histidine 243 each coordinate Zn(2+).

This sequence belongs to the KduI family. The cofactor is Zn(2+).

The catalysed reaction is 5-dehydro-4-deoxy-D-glucuronate = 3-deoxy-D-glycero-2,5-hexodiulosonate. Its pathway is glycan metabolism; pectin degradation; 2-dehydro-3-deoxy-D-gluconate from pectin: step 4/5. Catalyzes the isomerization of 5-dehydro-4-deoxy-D-glucuronate to 3-deoxy-D-glycero-2,5-hexodiulosonate. The protein is 4-deoxy-L-threo-5-hexosulose-uronate ketol-isomerase of Halalkalibacterium halodurans (strain ATCC BAA-125 / DSM 18197 / FERM 7344 / JCM 9153 / C-125) (Bacillus halodurans).